The primary structure comprises 366 residues: Histidinol-phosphate aminotransferase 2 (366 aa).

Positions 1 to 11 are enriched in polar residues; that stretch reads MQVKDQLSSLQ. The tract at residues 1–21 is disordered; the sequence is MQVKDQLSSLQPYKPGKSPEQ. Position 222 is an N6-(pyridoxal phosphate)lysine (Lys222).

This sequence belongs to the class-II pyridoxal-phosphate-dependent aminotransferase family. Histidinol-phosphate aminotransferase subfamily. As to quaternary structure, homodimer. Requires pyridoxal 5'-phosphate as cofactor.

The catalysed reaction is L-histidinol phosphate + 2-oxoglutarate = 3-(imidazol-4-yl)-2-oxopropyl phosphate + L-glutamate. Its pathway is amino-acid biosynthesis; L-histidine biosynthesis; L-histidine from 5-phospho-alpha-D-ribose 1-diphosphate: step 7/9. The chain is Histidinol-phosphate aminotransferase 2 (hisC2) from Bacillus cereus (strain ATCC 14579 / DSM 31 / CCUG 7414 / JCM 2152 / NBRC 15305 / NCIMB 9373 / NCTC 2599 / NRRL B-3711).